Reading from the N-terminus, the 227-residue chain is Class I hydrophobin A (227 aa).

The signal sequence occupies residues 1–18 (MQFSLSAIVLGLAATVYA). N50 carries an N-linked (GlcNAc...) asparagine glycan. Cystine bridges form between C60/C138, C68/C132, and C69/C109.

The protein belongs to the fungal hydrophobin family.

The protein localises to the secreted. It is found in the cell wall. Aerial growth, conidiation, and dispersal of filamentous fungi in the environment rely upon a capability of their secreting small amphipathic proteins called hydrophobins (HPBs) with low sequence identity. Class I can self-assemble into an outermost layer of rodlet bundles on aerial cell surfaces, conferring cellular hydrophobicity that supports fungal growth, development and dispersal; whereas Class II form highly ordered films at water-air interfaces through intermolecular interactions but contribute nothing to the rodlet structure. In P.expansum, hydrophobins contribute to germination, tolerance to cold stress and mycotoxins patulin and citrinin production. HfbA and HfbB are essential for fungal surface hydrophobicity and HfbA mediates air and water dispersal. This Penicillium expansum (Blue mold rot fungus) protein is Class I hydrophobin A.